The following is a 428-amino-acid chain: GTPase Obg (428 aa).

The 158-residue stretch at Met1 to Leu158 folds into the Obg domain. An OBG-type G domain is found at Ala159–Glu329. GTP contacts are provided by residues Gly165–Ser172, Phe190–Val194, Asp212–Gly215, Asn282–Asp285, and Ser310–Val312. Mg(2+)-binding residues include Ser172 and Thr192. The OCT domain maps to Lys350–Asp428.

This sequence belongs to the TRAFAC class OBG-HflX-like GTPase superfamily. OBG GTPase family. Monomer. Requires Mg(2+) as cofactor.

It localises to the cytoplasm. Its function is as follows. An essential GTPase which binds GTP, GDP and possibly (p)ppGpp with moderate affinity, with high nucleotide exchange rates and a fairly low GTP hydrolysis rate. Plays a role in control of the cell cycle, stress response, ribosome biogenesis and in those bacteria that undergo differentiation, in morphogenesis control. The protein is GTPase Obg of Bacillus cereus (strain B4264).